Here is an 888-residue protein sequence, read N- to C-terminus: Alanine--tRNA ligase (888 aa).

H573, H577, C676, and H680 together coordinate Zn(2+).

The protein belongs to the class-II aminoacyl-tRNA synthetase family. Zn(2+) serves as cofactor.

It is found in the cytoplasm. The enzyme catalyses tRNA(Ala) + L-alanine + ATP = L-alanyl-tRNA(Ala) + AMP + diphosphate. Catalyzes the attachment of alanine to tRNA(Ala) in a two-step reaction: alanine is first activated by ATP to form Ala-AMP and then transferred to the acceptor end of tRNA(Ala). Also edits incorrectly charged Ser-tRNA(Ala) and Gly-tRNA(Ala) via its editing domain. The protein is Alanine--tRNA ligase of Corynebacterium glutamicum (strain R).